Reading from the N-terminus, the 85-residue chain is Antibacterial factor-related peptide 1 (85 aa).

Positions 1-19 are cleaved as a signal peptide; it reads MLYFCLLLVLLLPNNGVSS.

In terms of tissue distribution, expressed in the pharynx and body wall muscle.

It localises to the secreted. The chain is Antibacterial factor-related peptide 1 from Caenorhabditis elegans.